Reading from the N-terminus, the 52-residue chain is Unknown protein from spot 415 of 2D-PAGE of etiolated coleoptile (52 aa).

This Zea mays (Maize) protein is Unknown protein from spot 415 of 2D-PAGE of etiolated coleoptile.